The primary structure comprises 94 residues: Large ribosomal subunit protein uL23 (94 aa).

This sequence belongs to the universal ribosomal protein uL23 family. In terms of assembly, part of the 50S ribosomal subunit. Contacts protein L29, and trigger factor when it is bound to the ribosome.

In terms of biological role, one of the early assembly proteins it binds 23S rRNA. One of the proteins that surrounds the polypeptide exit tunnel on the outside of the ribosome. Forms the main docking site for trigger factor binding to the ribosome. This chain is Large ribosomal subunit protein uL23, found in Akkermansia muciniphila (strain ATCC BAA-835 / DSM 22959 / JCM 33894 / BCRC 81048 / CCUG 64013 / CIP 107961 / Muc).